A 1059-amino-acid polypeptide reads, in one-letter code: RNA-binding protein 26 (1059 aa).

Basic and acidic residues-rich tracts occupy residues 98–114 (EKEI…EKEK) and 130–147 (RHKD…DRES). The segment at 98–275 (EKEIKKDEVN…PVDNSYASGS (178 aa)) is disordered. The segment covering 172–182 (LNSNKVQNAKN) has biased composition (polar residues). The segment covering 184–213 (RSRDDRKRDDRFRKREYDRNVPRRDSYRDR) has biased composition (basic and acidic residues). Positions 214 to 231 (YNRRRGRSRSYSRSRSRS) are enriched in basic residues. Residues 232–266 (WSKERQRDRDRSRSRTRSRDKDSGKPKFDLDRPDP) are compositionally biased toward basic and acidic residues. Residues 327–355 (QMQKKRCRDYDEKGFCMRGDMCPFDHGSD) form a C3H1-type zinc finger. A compositionally biased stretch (pro residues) spans 375 to 428 (PVLEGPPPPGLPPPPSLLTPPPVNLQPPPVPPPGPLPPSLPPVTGPPPPLPPLQ). The interval 375-443 (PVLEGPPPPG…APPNSATSSV (69 aa)) is disordered. Residues 434–443 (APPNSATSSV) show a composition bias toward low complexity. The RRM 1 domain maps to 581 to 655 (TKLELRRIPP…RFIRMYWHRE (75 aa)). Positions 771 to 873 (GDAQKKKQEA…LLDTELDLYN (103 aa)) form a coiled coil. The RRM 2 domain occupies 942-1011 (RALKISGFTE…QDLKLAWNKP (70 aa)). Residues 1010–1059 (KPVPNASSTEVEDADQEEEEFHEDSIVDDSLLQDDDEEEEDDNESRSWRR) are disordered. Composition is skewed to acidic residues over residues 1019–1031 (EVED…EEFH) and 1040–1052 (LLQD…EDDN).

May be involved in the turnover of nuclear polyadenylated (pA+) RNA. The chain is RNA-binding protein 26 from Xenopus laevis (African clawed frog).